Consider the following 530-residue polypeptide: AP-4 complex subunit mu (530 aa).

Residues 164–187 form a disordered region; it reads PKQGVKPIHSGSKNSSSGGSSLST. Residues 173 to 186 are compositionally biased toward low complexity; it reads SGSKNSSSGGSSLS. The MHD domain maps to 227 to 527; that stretch reads DNEIYIDLCE…ITDSKSFVSR (301 aa).

Belongs to the adaptor complexes medium subunit family. May be part of the adaptor protein complex 4 (AP-4), a heterotetramer composed of two large adaptins (epsilon-type subunitand beta-type subunit), a medium adaptin (mu-type subunit) and a small adaptin (sigma-type).

The protein localises to the golgi apparatus. The protein resides in the trans-Golgi network membrane. It localises to the early endosome. Its function is as follows. Probable component of an adaptor protein complex. Adaptor protein complexes are vesicle coat components involved both in vesicle formation and cargo selection. They control the vesicular transport of proteins in different trafficking pathways. In Dictyostelium discoideum (Social amoeba), this protein is AP-4 complex subunit mu (apm4).